The chain runs to 393 residues: E3 ubiquitin-protein transferase RMND5B (393 aa).

The residue at position 1 (M1) is an N-acetylmethionine. The region spanning 116-148 (QQQILQMAIVEHLYQQGMLSVAEELCQESTLNV) is the LisH domain. Residues 155 to 212 (PFLELNRILEALHEQDLGPALEWAVSHRQRLLELNSSLEFKLHRLHFIRLLAGGPAKQ) form the CTLH domain. An RING-Gid-type zinc finger spans residues 338-379 (CPILRQQTSDSNPPIKLICGHVISRDALNKLINGGKLKCPYC).

Identified in the CTLH complex that contains GID4, RANBP9 and/or RANBP10, MKLN1, MAEA, RMND5A (or alternatively its paralog RMND5B), GID8, ARMC8, WDR26 and YPEL5. Within this complex, MAEA, RMND5A (or alternatively its paralog RMND5B), GID8, WDR26, and RANBP9 and/or RANBP10 form the catalytic core, while GID4, MKLN1, ARMC8 and YPEL5 have ancillary roles.

Its subcellular location is the cytoplasm. The protein resides in the cytosol. The enzyme catalyses S-ubiquitinyl-[E2 ubiquitin-conjugating enzyme]-L-cysteine + [acceptor protein]-L-lysine = [E2 ubiquitin-conjugating enzyme]-L-cysteine + N(6)-ubiquitinyl-[acceptor protein]-L-lysine.. Functionally, core component of the CTLH E3 ubiquitin-protein ligase complex that selectively accepts ubiquitin from UBE2H and mediates ubiquitination and subsequent proteasomal degradation of the transcription factor HBP1. MAEA and RMND5A are both required for catalytic activity of the CTLH E3 ubiquitin-protein ligase complex. Catalytic activity of the complex is required for normal cell proliferation. The CTLH E3 ubiquitin-protein ligase complex is not required for the degradation of enzymes involved in gluconeogenesis, such as FBP1. The sequence is that of E3 ubiquitin-protein transferase RMND5B (RMND5B) from Homo sapiens (Human).